Consider the following 389-residue polypeptide: Phosphopentomutase (389 aa).

Mn(2+)-binding residues include Asp-12, Asp-284, His-289, Asp-325, His-326, and His-337.

It belongs to the phosphopentomutase family. Mn(2+) is required as a cofactor.

The protein resides in the cytoplasm. The enzyme catalyses 2-deoxy-alpha-D-ribose 1-phosphate = 2-deoxy-D-ribose 5-phosphate. It carries out the reaction alpha-D-ribose 1-phosphate = D-ribose 5-phosphate. Its pathway is carbohydrate degradation; 2-deoxy-D-ribose 1-phosphate degradation; D-glyceraldehyde 3-phosphate and acetaldehyde from 2-deoxy-alpha-D-ribose 1-phosphate: step 1/2. Functionally, isomerase that catalyzes the conversion of deoxy-ribose 1-phosphate (dRib-1-P) and ribose 1-phosphate (Rib-1-P) to deoxy-ribose 5-phosphate (dRib-5-P) and ribose 5-phosphate (Rib-5-P), respectively. This chain is Phosphopentomutase, found in Anaeromyxobacter sp. (strain Fw109-5).